A 384-amino-acid polypeptide reads, in one-letter code: 8-amino-7-oxononanoate synthase (384 aa).

Arg-21 contributes to the substrate binding site. Pyridoxal 5'-phosphate is bound at residue 108-109 (GF). His-133 contributes to the substrate binding site. Residues Ser-179, His-207, and Thr-233 each contribute to the pyridoxal 5'-phosphate site. Residue Lys-236 is modified to N6-(pyridoxal phosphate)lysine. Thr-352 contributes to the substrate binding site.

Belongs to the class-II pyridoxal-phosphate-dependent aminotransferase family. BioF subfamily. In terms of assembly, homodimer. Pyridoxal 5'-phosphate serves as cofactor.

It catalyses the reaction 6-carboxyhexanoyl-[ACP] + L-alanine + H(+) = (8S)-8-amino-7-oxononanoate + holo-[ACP] + CO2. Its pathway is cofactor biosynthesis; biotin biosynthesis. Its function is as follows. Catalyzes the decarboxylative condensation of pimeloyl-[acyl-carrier protein] and L-alanine to produce 8-amino-7-oxononanoate (AON), [acyl-carrier protein], and carbon dioxide. This is 8-amino-7-oxononanoate synthase from Escherichia coli O6:K15:H31 (strain 536 / UPEC).